The sequence spans 294 residues: Osteopontin (294 aa).

Residues 1-16 form the signal peptide; it reads MRLAVICFCLFGIASS. Phosphoserine is present on residues Ser-24, Ser-26, Ser-27, Ser-61, Ser-62, Ser-75, Ser-77, Ser-80, Ser-106, Ser-109, Ser-112, Ser-115, and Ser-118. Residues 42–274 are disordered; it reads WLVPDPSQKQ…LVLDPKSKED (233 aa). Residues 48-61 show a composition bias toward polar residues; it reads SQKQNLLAPQNAVS. Residues 85–110 are compositionally biased toward acidic residues; it reads DDDDDDDDDDGDHAESEDSVDSDESD. The segment covering 121 to 130 has biased composition (polar residues); that stretch reads TVTASTQADT. O-linked (GalNAc...) threonine glycosylation is found at Thr-123, Thr-132, and Thr-137. The Cell attachment site motif lies at 144 to 146; that stretch reads RGD. A phosphothreonine mark is found at Thr-170 and Thr-175. The segment covering 174–187 has biased composition (basic and acidic residues); the sequence is LTSHMKSGESKESL. A phosphoserine mark is found at Ser-176, Ser-180, Ser-200, Ser-209, Ser-213, and Ser-219. Over residues 197 to 216 the composition is skewed to polar residues; that stretch reads SMPSDQDNNGKGSHESSQLD. Residue Ser-219 is glycosylated (O-linked (Xyl...) (chondroitin sulfate) serine). Positions 220-232 are enriched in basic and acidic residues; it reads LETHRLEHSKESQ. Thr-222 bears the Phosphothreonine mark. 14 positions are modified to phosphoserine: Ser-228, Ser-231, Ser-234, Ser-238, Ser-243, Ser-247, Ser-250, Ser-255, Ser-260, Ser-271, Ser-283, Ser-288, Ser-290, and Ser-291. Residues 234–249 show a composition bias toward polar residues; the sequence is SADQSDVIDSQASSKA. Residues 263–274 show a composition bias toward basic and acidic residues; it reads DKLVLDPKSKED. An O-linked (Xyl...) (chondroitin sulfate) serine glycan is attached at Ser-288.

The protein belongs to the osteopontin family. In terms of assembly, interacts (via N-terminus) with integrin ITGA9:ITGB1. Post-translationally, extensively phosphorylated by FAM20C in the extracellular medium at multiple sites within the S-x-E/pS motif. The phosphorylated form inhibits hydroxyapatite crystallization. Dephosphorylation via a mechanism involving ALPL/TNAP promotes hydroxyapatite crystallization. In terms of processing, O-glycosylated. Forms covalent cross-links mediated by transglutaminase TGM2, between a glutamine and the epsilon-amino group of a lysine residue, forming homopolymers and heteropolymers, increasing its collagen binding properties.

It is found in the secreted. Its function is as follows. Major non-collagenous bone protein that binds tightly to hydroxyapatite. Appears to form an integral part of the mineralized matrix. Probably important to cell-matrix interaction. In terms of biological role, acts as a cytokine involved in enhancing production of interferon-gamma and interleukin-12 and reducing production of interleukin-10 and is essential in the pathway that leads to type I immunity. The sequence is that of Osteopontin (Spp1) from Mus musculus (Mouse).